Here is a 100-residue protein sequence, read N- to C-terminus: Biogenesis of lysosome-related organelles complex 1 subunit CNL1 (100 aa).

The stretch at 25–46 forms a coiled coil; sequence SDRVKSLELEATRLVQRQNELV.

The protein belongs to the BLOC1S4 family. As to quaternary structure, component of the biogenesis of lysosome-related organelles complex-1 (BLOC-1).

It localises to the cytoplasm. Component of the biogenesis of lysosome-related organelles complex-1 (BLOC-1), a complex that is involved in endosomal cargo sorting. In Candida glabrata (strain ATCC 2001 / BCRC 20586 / JCM 3761 / NBRC 0622 / NRRL Y-65 / CBS 138) (Yeast), this protein is Biogenesis of lysosome-related organelles complex 1 subunit CNL1 (CLN1).